Reading from the N-terminus, the 483-residue chain is MNYFPIFANLAGRPVLVVGGGAVAARKISLLLKAGAEVRVAAKHLNAELSALAAENKILWLAEEFRAEHIRTVFLIIAASSDQALNRRVFHLAESCQKPVNVVDDRDHCSFIFPSVIDRNPVQIAVSSSGSAPVLARLLRERLEALLPPSLGDMAEISGRWRDAVKGKLKSVTERRRFWEKQFNGRFAALVKNRQNTLAERELAKQLEQNYQGGFVSLVGAGPGDAGLLTLKGLQEIQQADVVLYDALVSDGILSLVRRDAERIFVGKRARGGRTPQEDTNALMVRLAREGRRVVRLKGGDPFVFGRGGEELETLARHQIPFSVVPGITAAVGATAYAGIPLTHRDYAQSAVFVTGHRKADAPDIEWQTLARSRQTLVIYMGALKAALIAERLQQHGRSPDTPAAVISQGTLPAQKTATGTLANLSELAETAPNPALIVIGEVVGLHEKLAWFGENAKKESNPAEHAYFALDGLGTGQEQQAA.

Positions 1–203 are precorrin-2 dehydrogenase /sirohydrochlorin ferrochelatase; sequence MNYFPIFANL…RQNTLAEREL (203 aa). NAD(+) contacts are provided by residues 22–23 and 43–44; these read AV and KH. Phosphoserine is present on serine 128. A uroporphyrinogen-III C-methyltransferase region spans residues 214–483; sequence GFVSLVGAGP…LGTGQEQQAA (270 aa). Residue proline 223 coordinates S-adenosyl-L-methionine. Aspartate 246 (proton acceptor) is an active-site residue. The active-site Proton donor is the lysine 268. Residues 299 to 301, valine 304, 329 to 330, methionine 381, and glycine 410 each bind S-adenosyl-L-methionine; these read GGD and TA.

The protein in the N-terminal section; belongs to the precorrin-2 dehydrogenase / sirohydrochlorin ferrochelatase family. This sequence in the C-terminal section; belongs to the precorrin methyltransferase family.

The catalysed reaction is uroporphyrinogen III + 2 S-adenosyl-L-methionine = precorrin-2 + 2 S-adenosyl-L-homocysteine + H(+). The enzyme catalyses precorrin-2 + NAD(+) = sirohydrochlorin + NADH + 2 H(+). It carries out the reaction siroheme + 2 H(+) = sirohydrochlorin + Fe(2+). Its pathway is cofactor biosynthesis; adenosylcobalamin biosynthesis; precorrin-2 from uroporphyrinogen III: step 1/1. It participates in cofactor biosynthesis; adenosylcobalamin biosynthesis; sirohydrochlorin from precorrin-2: step 1/1. The protein operates within porphyrin-containing compound metabolism; siroheme biosynthesis; precorrin-2 from uroporphyrinogen III: step 1/1. It functions in the pathway porphyrin-containing compound metabolism; siroheme biosynthesis; siroheme from sirohydrochlorin: step 1/1. Its pathway is porphyrin-containing compound metabolism; siroheme biosynthesis; sirohydrochlorin from precorrin-2: step 1/1. Functionally, multifunctional enzyme that catalyzes the SAM-dependent methylations of uroporphyrinogen III at position C-2 and C-7 to form precorrin-2 via precorrin-1. Then it catalyzes the NAD-dependent ring dehydrogenation of precorrin-2 to yield sirohydrochlorin. Finally, it catalyzes the ferrochelation of sirohydrochlorin to yield siroheme. This is Siroheme synthase from Neisseria meningitidis serogroup C / serotype 2a (strain ATCC 700532 / DSM 15464 / FAM18).